A 515-amino-acid polypeptide reads, in one-letter code: Fatty acyl-CoA reductase 2 (515 aa).

Residues Met1 to Arg464 lie on the Cytoplasmic side of the membrane. A helical transmembrane segment spans residues Asn465–Ala484. The Peroxisomal portion of the chain corresponds to Arg485–Val515.

It belongs to the fatty acyl-CoA reductase family.

Its subcellular location is the peroxisome membrane. The catalysed reaction is a long-chain fatty acyl-CoA + 2 NADPH + 2 H(+) = a long-chain primary fatty alcohol + 2 NADP(+) + CoA. It catalyses the reaction a very long-chain fatty acyl-CoA + 2 NADPH + 2 H(+) = a very long-chain primary fatty alcohol + 2 NADP(+) + CoA. It carries out the reaction an ultra-long-chain fatty acyl-CoA + 2 NADPH + 2 H(+) = an ultra long-chain primary fatty alcohol + 2 NADP(+) + CoA. The enzyme catalyses hexadecanoyl-CoA + 2 NADPH + 2 H(+) = hexadecan-1-ol + 2 NADP(+) + CoA. The catalysed reaction is octadecanoyl-CoA + 2 NADPH + 2 H(+) = octadecan-1-ol + 2 NADP(+) + CoA. It catalyses the reaction eicosanoyl-CoA + 2 NADPH + 2 H(+) = eicosan-1-ol + 2 NADP(+) + CoA. It carries out the reaction docosanoyl-CoA + 2 NADPH + 2 H(+) = docosan-1-ol + 2 NADP(+) + CoA. The enzyme catalyses tetracosanoyl-CoA + 2 NADPH + 2 H(+) = tetracosan-1-ol + 2 NADP(+) + CoA. The catalysed reaction is hexacosanoyl-CoA + 2 NADPH + 2 H(+) = hexacosan-1-ol + 2 NADP(+) + CoA. It catalyses the reaction octacosanoyl-CoA + 2 NADPH + 2 H(+) = octacosan-1-ol + 2 NADP(+) + CoA. It carries out the reaction triacontanoyl-CoA + 2 NADPH + 2 H(+) = triacontan-1-ol + 2 NADP(+) + CoA. The enzyme catalyses 18-methylnonadecanoyl-CoA + 2 NADPH + 2 H(+) = 18-methylnonadecan-1-ol + 2 NADP(+) + CoA. The catalysed reaction is 20-methylheneicosanoyl-CoA + 2 NADPH + 2 H(+) = 20-methylheneicosan-1-ol + 2 NADP(+) + CoA. It catalyses the reaction 22-methyltricosanoyl-CoA + 2 NADPH + 2 H(+) = 22-methyltricosan-1-ol + 2 NADP(+) + CoA. It carries out the reaction 24-methylpentacosanoyl-CoA + 2 NADPH + 2 H(+) = 24-methylpentacosan-1-ol + 2 NADP(+) + CoA. Catalyzes the reduction of saturated but not unsaturated C16 or C18 fatty acyl-CoA to fatty alcohols (FAls). A lower activity can be observed with shorter fatty acyl-CoA substrates. Can produce very long-chain and ultra long-chain FAls, regardless of whether they have a straight or branched chain. Involved in the production of ether lipids/plasmalogens and wax monoesters whose synthesis requires FAls as substrates. The sequence is that of Fatty acyl-CoA reductase 2 from Homo sapiens (Human).